Consider the following 252-residue polypeptide: tRNA uridine(34) hydroxylase (252 aa).

The Rhodanese domain maps to 129 to 223 (QGRPVVMLDT…YFEETGGKGF (95 aa)). Cys-183 acts as the Cysteine persulfide intermediate in catalysis.

Belongs to the TrhO family.

The enzyme catalyses uridine(34) in tRNA + AH2 + O2 = 5-hydroxyuridine(34) in tRNA + A + H2O. Functionally, catalyzes oxygen-dependent 5-hydroxyuridine (ho5U) modification at position 34 in tRNAs. The sequence is that of tRNA uridine(34) hydroxylase from Bordetella petrii (strain ATCC BAA-461 / DSM 12804 / CCUG 43448).